The sequence spans 236 residues: Ubiquinone biosynthesis O-methyltransferase (236 aa).

Positions 40, 59, 80, and 124 each coordinate S-adenosyl-L-methionine.

The protein belongs to the methyltransferase superfamily. UbiG/COQ3 family.

It carries out the reaction a 3-demethylubiquinol + S-adenosyl-L-methionine = a ubiquinol + S-adenosyl-L-homocysteine + H(+). It catalyses the reaction a 3-(all-trans-polyprenyl)benzene-1,2-diol + S-adenosyl-L-methionine = a 2-methoxy-6-(all-trans-polyprenyl)phenol + S-adenosyl-L-homocysteine + H(+). It functions in the pathway cofactor biosynthesis; ubiquinone biosynthesis. In terms of biological role, O-methyltransferase that catalyzes the 2 O-methylation steps in the ubiquinone biosynthetic pathway. The protein is Ubiquinone biosynthesis O-methyltransferase of Saccharophagus degradans (strain 2-40 / ATCC 43961 / DSM 17024).